The chain runs to 103 residues: Putative membrane protein insertion efficiency factor (103 aa).

Belongs to the UPF0161 family.

It is found in the cell inner membrane. Could be involved in insertion of integral membrane proteins into the membrane. The sequence is that of Putative membrane protein insertion efficiency factor from Chlamydia pneumoniae (Chlamydophila pneumoniae).